We begin with the raw amino-acid sequence, 212 residues long: Thymidylate kinase (212 aa).

10–17 (GLEGAGKT) is an ATP binding site.

This sequence belongs to the thymidylate kinase family.

It catalyses the reaction dTMP + ATP = dTDP + ADP. Its function is as follows. Phosphorylation of dTMP to form dTDP in both de novo and salvage pathways of dTTP synthesis. The protein is Thymidylate kinase of Cronobacter sakazakii (strain ATCC BAA-894) (Enterobacter sakazakii).